The chain runs to 783 residues: Tripartite motif-containing protein 67 (783 aa).

An RING-type; degenerate zinc finger spans residues 7–42 (CPVCGSLFREPIILPCSHNVCLPCARTIAVQTPDGE). A B box-type 1; degenerate zinc finger spans residues 206–253 (AICQLCDRTPPEPAATLCEQCDVLYCSACQLKCHPSRGPFAKHRLVQP). Residues 247 to 295 (KHRLVQPPPPPPPPAEAASGPTGTAQGAPSGGGGCKSPGGAGAGATGGS) form a disordered region. Over residues 252 to 261 (QPPPPPPPPA) the composition is skewed to pro residues. Residues 275 to 293 (PSGGGGCKSPGGAGAGATG) are compositionally biased toward gly residues. The segment at 298 to 340 (RKFPTCPEHEMENYSMYCVSCRTPVCYLCLEEGRHAKHEVKPL) adopts a B box-type 2 zinc-finger fold. Zn(2+)-binding residues include cysteine 303, histidine 306, cysteine 326, and histidine 332. A coiled-coil region spans residues 345–382 (KQHKAQLSQALNGVSDKAKEAKEFLVQLKNILQQIQEN). The region spanning 448–506 (IKENDPSGFLQISDALIKRVQVSQEQWVKGALEPKVSAEFDLTLDSEPLLQAIHQLDFI) is the COS domain. The region spanning 513–607 (PPVPLLQLEK…KTVVLQTSDV (95 aa)) is the Fibronectin type-III domain. The 192-residue stretch at 589–780 (NSSGVGPYSK…VPTNLGRPKL (192 aa)) folds into the B30.2/SPRY domain.

It belongs to the TRIM/RBCC family.

The protein resides in the cytoplasm. The protein localises to the cytoskeleton. This is Tripartite motif-containing protein 67 (TRIM67) from Homo sapiens (Human).